Here is an 857-residue protein sequence, read N- to C-terminus: Glucans biosynthesis glucosyltransferase H (857 aa).

6 helical membrane-spanning segments follow: residues Ile-142–Leu-162, Ile-196–Met-216, Val-515–Leu-535, Leu-572–Trp-592, Thr-606–Phe-626, and Phe-682–Ile-702.

It belongs to the glycosyltransferase 2 family. OpgH subfamily.

It localises to the cell inner membrane. Its pathway is glycan metabolism; osmoregulated periplasmic glucan (OPG) biosynthesis. Its function is as follows. Involved in the biosynthesis of osmoregulated periplasmic glucans (OPGs). The chain is Glucans biosynthesis glucosyltransferase H from Pseudomonas putida (strain W619).